Consider the following 130-residue polypeptide: Small ribosomal subunit protein uS9 (130 aa).

The protein belongs to the universal ribosomal protein uS9 family.

The polypeptide is Small ribosomal subunit protein uS9 (Ectopseudomonas mendocina (strain ymp) (Pseudomonas mendocina)).